The primary structure comprises 302 residues: Bifunctional phosphoglucose/phosphomannose isomerase (302 aa).

Positions V27–P160 constitute an SIS domain. The D-fructose 6-phosphate site is built by G47, S48, S87, S89, T92, and R135. Residues G47, S48, S87, S89, T92, and R135 each contribute to the D-glucose 6-phosphate site. E203 (proton acceptor) is an active-site residue. The D-fructose 6-phosphate site is built by H219 and K298. Residues H219 and K298 each contribute to the D-glucose 6-phosphate site. H219 acts as the Proton donor in catalysis. Catalysis depends on K298, which acts as the Proton acceptor.

The protein belongs to the PGI/PMI family. Homodimer.

It is found in the cytoplasm. The enzyme catalyses alpha-D-glucose 6-phosphate = beta-D-fructose 6-phosphate. It catalyses the reaction D-mannose 6-phosphate = D-fructose 6-phosphate. With respect to regulation, inhibited by 5-phosphoarabinonate (PAB) and 6-phosphogluconate. Functionally, dual specificity isomerase that catalyzes the isomerization of both glucose-6-phosphate and mannose-6-phosphate to fructose-6-phosphate with similar catalytic efficiency. The sequence is that of Bifunctional phosphoglucose/phosphomannose isomerase from Pyrobaculum aerophilum (strain ATCC 51768 / DSM 7523 / JCM 9630 / CIP 104966 / NBRC 100827 / IM2).